Consider the following 278-residue polypeptide: 2,5-diketo-D-gluconic acid reductase A (278 aa).

Tyr50 serves as the catalytic Proton donor. Residue His108 participates in substrate binding. Gly188–Asn242 is an NADP(+) binding site. The disordered stretch occupies residues Asp259–Asp278.

Belongs to the aldo/keto reductase family. Monomer.

It localises to the cytoplasm. It carries out the reaction 2-dehydro-L-idonate + NADP(+) = 2,5-didehydro-D-gluconate + NADPH + H(+). With respect to regulation, inhibited by Zn(2+), Fe(3+), Cu(2+) and Ni(2+). Its function is as follows. Catalyzes the reduction of 2,5-diketo-D-gluconic acid (25DKG) to 2-keto-L-gulonic acid (2KLG). 5-keto-D-fructose and dihydroxyacetone can also serve as substrates. 25DKGR-A exhibits a greater selectivity for the substrate and higher thermal stability than 25DKGR-B. The protein is 2,5-diketo-D-gluconic acid reductase A (dkgA) of Corynebacterium sp. (strain ATCC 31090).